Reading from the N-terminus, the 376-residue chain is MSNVTTPWWKQWDPSEVTLADKTPDDVWKTCVLQGVYFGGNEYNGNLGARISSVFVILFVSTFFTMFPLISTKVKRLRIPLYVYLFAKYFGSGVIVATAFIHLMDPAYGAIGGTTCVGQTGNWGLYSWCPAIMLTSLTFTFLTDLFSSVWVERKYGLSHDHTHDEIKDTVVRNTAAVSSENDNENGTANGSHDTKNGVEYYEDSDATSMDVVQSFQAQFYAFLILEFGVIFHSVMIGLNLGSVGDEFSSLYPVLVFHQSFEGLGIGARLSAIEFPRSKRWWPWALCVAYGLTTPICVAIGLGVRTRYVSGSYTALVISGVLDAISAGILLYTGLVELLARDFIFNPQRTKDLRELSFNVICTLFGAGIMALIGKWA.

Residues 1-50 are Extracellular-facing; that stretch reads MSNVTTPWWKQWDPSEVTLADKTPDDVWKTCVLQGVYFGGNEYNGNLGAR. A helical transmembrane segment spans residues 51-71; it reads ISSVFVILFVSTFFTMFPLIS. Over 72-80 the chain is Cytoplasmic; the sequence is TKVKRLRIP. A helical transmembrane segment spans residues 81–101; the sequence is LYVYLFAKYFGSGVIVATAFI. Residues 102-122 lie on the Extracellular side of the membrane; sequence HLMDPAYGAIGGTTCVGQTGN. Residues 123 to 143 form a helical membrane-spanning segment; sequence WGLYSWCPAIMLTSLTFTFLT. Residues 144–216 lie on the Cytoplasmic side of the membrane; it reads DLFSSVWVER…TSMDVVQSFQ (73 aa). The span at 177–191 shows a compositional bias: polar residues; that stretch reads VSSENDNENGTANGS. The interval 177–196 is disordered; it reads VSSENDNENGTANGSHDTKN. Residues 217-237 form a helical membrane-spanning segment; it reads AQFYAFLILEFGVIFHSVMIG. At 238–242 the chain is on the extracellular side; sequence LNLGS. A helical membrane pass occupies residues 243 to 263; it reads VGDEFSSLYPVLVFHQSFEGL. Topologically, residues 264–278 are cytoplasmic; that stretch reads GIGARLSAIEFPRSK. The chain crosses the membrane as a helical span at residues 279-299; that stretch reads RWWPWALCVAYGLTTPICVAI. Residues 300-310 are Extracellular-facing; the sequence is GLGVRTRYVSG. A helical transmembrane segment spans residues 311–331; it reads SYTALVISGVLDAISAGILLY. Residues 332–354 lie on the Cytoplasmic side of the membrane; sequence TGLVELLARDFIFNPQRTKDLRE. The chain crosses the membrane as a helical span at residues 355-375; it reads LSFNVICTLFGAGIMALIGKW. Position 376 (alanine 376) is a topological domain, extracellular.

Belongs to the ZIP transporter (TC 2.A.5) family.

It is found in the membrane. High-affinity zinc transport protein. In Saccharomyces cerevisiae (strain ATCC 204508 / S288c) (Baker's yeast), this protein is Zinc-regulated transporter 1 (ZRT1).